A 229-amino-acid polypeptide reads, in one-letter code: ATP-dependent dethiobiotin synthetase BioD (229 aa).

E15–L20 is an ATP binding site. Residue T19 participates in Mg(2+) binding. The active site involves K40. ATP contacts are provided by residues D57, E118–G121, and P207–L209. Residues D57 and E118 each coordinate Mg(2+).

It belongs to the dethiobiotin synthetase family. In terms of assembly, homodimer. The cofactor is Mg(2+).

The protein localises to the cytoplasm. It carries out the reaction (7R,8S)-7,8-diammoniononanoate + CO2 + ATP = (4R,5S)-dethiobiotin + ADP + phosphate + 3 H(+). Its pathway is cofactor biosynthesis; biotin biosynthesis; biotin from 7,8-diaminononanoate: step 1/2. Catalyzes a mechanistically unusual reaction, the ATP-dependent insertion of CO2 between the N7 and N8 nitrogen atoms of 7,8-diaminopelargonic acid (DAPA, also called 7,8-diammoniononanoate) to form a ureido ring. The chain is ATP-dependent dethiobiotin synthetase BioD from Ralstonia nicotianae (strain ATCC BAA-1114 / GMI1000) (Ralstonia solanacearum).